The chain runs to 246 residues: Serine protease 1 (246 aa).

The N-terminal stretch at 1 to 15 (MKTFIFLALLGATVA) is a signal peptide. The propeptide at 16 to 23 (FPIDDDDK) is activation peptide. The region spanning 24 to 244 (IVGGYTCSRN…YVSWIQQTIA (221 aa)) is the Peptidase S1 domain. Cystine bridges form between Cys30–Cys160, Cys48–Cys64, Cys132–Cys233, Cys139–Cys206, Cys171–Cys185, and Cys196–Cys220. The active-site Charge relay system is the His63. Ca(2+) is bound by residues Glu75, Asn77, Val80, and Glu85. Asp107 functions as the Charge relay system in the catalytic mechanism. Ser200 acts as the Charge relay system in catalysis.

The protein belongs to the peptidase S1 family. As to quaternary structure, interacts with SERPINA1. Ca(2+) serves as cofactor.

The protein resides in the secreted. It is found in the extracellular space. The catalysed reaction is Preferential cleavage: Arg-|-Xaa, Lys-|-Xaa.. This is Serine protease 1 from Canis lupus familiaris (Dog).